A 784-amino-acid polypeptide reads, in one-letter code: Spindle pole body component alp4 (784 aa).

The protein belongs to the TUBGCP family. As to quaternary structure, part of the gamma-tubulin complex. Interacts with mcp6. Interacts with mto1. Interacts with mto2.

The protein localises to the cytoplasm. The protein resides in the cytoskeleton. It is found in the microtubule organizing center. It localises to the spindle pole body. Functionally, component of the gamma tubule complex that is required for the regulation of both interphase microtubules and mitotic bipolar spindles. The chain is Spindle pole body component alp4 (alp4) from Schizosaccharomyces pombe (strain 972 / ATCC 24843) (Fission yeast).